Here is a 282-residue protein sequence, read N- to C-terminus: NADPH-dependent 7-cyano-7-deazaguanine reductase (282 aa).

88–90 is a substrate binding site; the sequence is IES. NADPH is bound at residue 90 to 91; it reads SK. The active-site Thioimide intermediate is the Cys-190. The active-site Proton donor is Asp-197. Residue 229 to 230 coordinates substrate; sequence HE. 258 to 259 contacts NADPH; the sequence is RG.

It belongs to the GTP cyclohydrolase I family. QueF type 2 subfamily. In terms of assembly, homodimer.

It is found in the cytoplasm. The enzyme catalyses 7-aminomethyl-7-carbaguanine + 2 NADP(+) = 7-cyano-7-deazaguanine + 2 NADPH + 3 H(+). It functions in the pathway tRNA modification; tRNA-queuosine biosynthesis. Its function is as follows. Catalyzes the NADPH-dependent reduction of 7-cyano-7-deazaguanine (preQ0) to 7-aminomethyl-7-deazaguanine (preQ1). This Citrobacter koseri (strain ATCC BAA-895 / CDC 4225-83 / SGSC4696) protein is NADPH-dependent 7-cyano-7-deazaguanine reductase.